Here is a 186-residue protein sequence, read N- to C-terminus: Ribosome-recycling factor (186 aa).

The protein belongs to the RRF family.

It is found in the cytoplasm. Responsible for the release of ribosomes from messenger RNA at the termination of protein biosynthesis. May increase the efficiency of translation by recycling ribosomes from one round of translation to another. In Rhizobium leguminosarum bv. trifolii (strain WSM2304), this protein is Ribosome-recycling factor.